Here is a 180-residue protein sequence, read N- to C-terminus: Alkyl hydroperoxide reductase AhpD (180 aa).

Cys131 (proton donor) is an active-site residue. Cys131 and Cys134 are joined by a disulfide. The active-site Cysteine sulfenic acid (-SOH) intermediate is Cys134.

It belongs to the AhpD family.

The enzyme catalyses N(6)-[(R)-dihydrolipoyl]-L-lysyl-[lipoyl-carrier protein] + a hydroperoxide = N(6)-[(R)-lipoyl]-L-lysyl-[lipoyl-carrier protein] + an alcohol + H2O. Its function is as follows. Antioxidant protein with alkyl hydroperoxidase activity. Required for the reduction of the AhpC active site cysteine residues and for the regeneration of the AhpC enzyme activity. This is Alkyl hydroperoxide reductase AhpD from Beijerinckia indica subsp. indica (strain ATCC 9039 / DSM 1715 / NCIMB 8712).